Here is a 323-residue protein sequence, read N- to C-terminus: Olfactory receptor 5P58 (323 aa).

Topologically, residues 1-28 (MAFLEDGNHTAVTEFILVGLTDDPVLKV) are extracellular. A glycan (N-linked (GlcNAc...) asparagine) is linked at asparagine 8. Residues 29 to 49 (ILFTIILCIYLVTVSGNLSTI) traverse the membrane as a helical segment. Topologically, residues 50–57 (LLIRVSSQ) are cytoplasmic. The chain crosses the membrane as a helical span at residues 58–78 (LHHPMYFFLSHLASVDLGYSS). Over 79 to 102 (SVTPNMLINFLAENNTISYIGCSI) the chain is Extracellular. A glycan (N-linked (GlcNAc...) asparagine) is linked at asparagine 92. Cysteine 100 and cysteine 192 are oxidised to a cystine. The helical transmembrane segment at 103-123 (QFGSATFFGVLECFLLAVMAY) threads the bilayer. The Cytoplasmic portion of the chain corresponds to 124-136 (DRFVAICNPLLYS). A helical membrane pass occupies residues 137-157 (IKMSTQVCVKLVVGSYIGSSL). The Extracellular segment spans residues 158–199 (NASFVTVSIFNLLFCGPNKINHFFCDFDPLIELSCSDVSVPV). A helical transmembrane segment spans residues 200–220 (AVTSCSAGLITMITVFVIAVS). Residues 221–240 (YTYILITVLKMRSTEGRHKA) lie on the Cytoplasmic side of the membrane. A helical membrane pass occupies residues 241–261 (FSTCTSHLTAVTLFYGTVTFI). Over 262–274 (YVMPKSNYSTDQN) the chain is Extracellular. Asparagine 268 carries an N-linked (GlcNAc...) asparagine glycan. The chain crosses the membrane as a helical span at residues 275 to 295 (KVVSVFYMVVIPMLNPLIYSL). Topologically, residues 296–323 (RNNEIKGALKRQLGKKIFSQSNILFCKS) are cytoplasmic.

It belongs to the G-protein coupled receptor 1 family.

The protein resides in the cell membrane. Its function is as follows. Potential odorant receptor. The polypeptide is Olfactory receptor 5P58 (Mus musculus (Mouse)).